A 137-amino-acid chain; its full sequence is Cell division protein SepF (137 aa).

Belongs to the SepF family. In terms of assembly, homodimer. Interacts with FtsZ.

It localises to the cytoplasm. Cell division protein that is part of the divisome complex and is recruited early to the Z-ring. Probably stimulates Z-ring formation, perhaps through the cross-linking of FtsZ protofilaments. Its function overlaps with FtsA. This is Cell division protein SepF from Thermoanaerobacter pseudethanolicus (strain ATCC 33223 / 39E) (Clostridium thermohydrosulfuricum).